The sequence spans 159 residues: Putative pre-16S rRNA nuclease (159 aa).

The protein belongs to the YqgF nuclease family.

Its subcellular location is the cytoplasm. Its function is as follows. Could be a nuclease involved in processing of the 5'-end of pre-16S rRNA. This is Putative pre-16S rRNA nuclease from Bartonella henselae (strain ATCC 49882 / DSM 28221 / CCUG 30454 / Houston 1) (Rochalimaea henselae).